The following is a 786-amino-acid chain: Ribosome biogenesis protein BOP1 homolog (786 aa).

A compositionally biased stretch (basic residues) spans 1–11; it reads MAKKSAIKRKV. A disordered region spans residues 1 to 161; the sequence is MAKKSAIKRK…NSDTSDEEDI (161 aa). Polar residues predominate over residues 17 to 26; it reads INEQASVSEQ. 3 stretches are compositionally biased toward acidic residues: residues 44–53, 60–72, and 82–114; these read EDTTDDEGID, TSDD…DEEG, and SGED…DDAK. The segment covering 122–135 has biased composition (polar residues); the sequence is KATLSKTTGDSSNI. Residues 141–150 show a composition bias toward basic and acidic residues; that stretch reads PRRDPSKPEY. Over residues 151–160 the composition is skewed to acidic residues; it reads ENSDTSDEED. WD repeat units lie at residues 447-488, 490-528, 572-614, 617-655, 658-697, 701-740, and 756-786; these read GHTD…RTIE, NDVV…KLLV, THFK…SQIP, KSKG…LIKK, TNSK…KPYQ, LHRN…DLLQ, and RDEF…RLYT.

It belongs to the WD repeat BOP1/ERB1 family.

Its subcellular location is the nucleus. It localises to the nucleolus. The protein resides in the nucleoplasm. In terms of biological role, required for maturation of ribosomal RNAs and formation of the large ribosomal subunit. The chain is Ribosome biogenesis protein BOP1 homolog from Drosophila grimshawi (Hawaiian fruit fly).